A 446-amino-acid polypeptide reads, in one-letter code: N-succinylarginine dihydrolase (446 aa).

Substrate is bound by residues 19-28 (AGLSFGNEAS), Asn110, and 137-138 (HR). The active site involves Glu174. Residue Arg213 coordinates substrate. Residue His249 is part of the active site. 2 residues coordinate substrate: Asp251 and Asn364. Cys370 acts as the Nucleophile in catalysis.

This sequence belongs to the succinylarginine dihydrolase family. In terms of assembly, homodimer.

The enzyme catalyses N(2)-succinyl-L-arginine + 2 H2O + 2 H(+) = N(2)-succinyl-L-ornithine + 2 NH4(+) + CO2. Its pathway is amino-acid degradation; L-arginine degradation via AST pathway; L-glutamate and succinate from L-arginine: step 2/5. Functionally, catalyzes the hydrolysis of N(2)-succinylarginine into N(2)-succinylornithine, ammonia and CO(2). This chain is N-succinylarginine dihydrolase, found in Serratia proteamaculans (strain 568).